Reading from the N-terminus, the 227-residue chain is 7-cyano-7-deazaguanine synthase (227 aa).

Position 9–19 (9–19 (LSGGLDSATVL)) interacts with ATP. Positions 189, 199, 202, and 205 each coordinate Zn(2+).

The protein belongs to the QueC family. It depends on Zn(2+) as a cofactor.

The enzyme catalyses 7-carboxy-7-deazaguanine + NH4(+) + ATP = 7-cyano-7-deazaguanine + ADP + phosphate + H2O + H(+). The protein operates within purine metabolism; 7-cyano-7-deazaguanine biosynthesis. Its function is as follows. Catalyzes the ATP-dependent conversion of 7-carboxy-7-deazaguanine (CDG) to 7-cyano-7-deazaguanine (preQ(0)). The chain is 7-cyano-7-deazaguanine synthase from Cupriavidus taiwanensis (strain DSM 17343 / BCRC 17206 / CCUG 44338 / CIP 107171 / LMG 19424 / R1) (Ralstonia taiwanensis (strain LMG 19424)).